Consider the following 680-residue polypeptide: Cytosolic endo-beta-N-acetylglucosaminidase 1 (680 aa).

Residues 1–15 (MSVAPPAPSPPPFDP) are compositionally biased toward pro residues. The segment at 1–21 (MSVAPPAPSPPPFDPTKPSTP) is disordered.

This sequence belongs to the glycosyl hydrolase 85 family.

The protein resides in the cytoplasm. Its subcellular location is the cytosol. The catalysed reaction is an N(4)-(oligosaccharide-(1-&gt;3)-[oligosaccharide-(1-&gt;6)]-beta-D-Man-(1-&gt;4)-beta-D-GlcNAc-(1-&gt;4)-alpha-D-GlcNAc)-L-asparaginyl-[protein] + H2O = an oligosaccharide-(1-&gt;3)-[oligosaccharide-(1-&gt;6)]-beta-D-Man-(1-&gt;4)-D-GlcNAc + N(4)-(N-acetyl-beta-D-glucosaminyl)-L-asparaginyl-[protein]. Functionally, endoglycosidase that releases N-glycans from glycoproteins by cleaving the beta-1,4-glycosidic bond in the N,N'-diacetylchitobiose core. Involved in the production of high-mannose type N-glycans during plant development and fruit maturation. This Arabidopsis thaliana (Mouse-ear cress) protein is Cytosolic endo-beta-N-acetylglucosaminidase 1.